Here is a 157-residue protein sequence, read N- to C-terminus: Protein Smg homolog (157 aa).

Belongs to the Smg family.

This is Protein Smg homolog from Aliivibrio salmonicida (strain LFI1238) (Vibrio salmonicida (strain LFI1238)).